The following is a 157-amino-acid chain: Putative dehydration-responsive element-binding protein 2H (157 aa).

A Nuclear localization signal motif is present at residues 5–21 (RKSRGTRDVAEILRKWR). A disordered region spans residues 29-57 (ADSCIDGGGSKPIRKAPPKRSRKGCMKGK). Basic residues predominate over residues 40-54 (PIRKAPPKRSRKGCM). A DNA-binding region (AP2/ERF) is located at residues 66–123 (DYTGVRQRTWGKWVAEIREPGRGAKLWLGTFSSSYEAALAYDEASKAIYGQSARLNLP).

It belongs to the AP2/ERF transcription factor family. ERF subfamily.

It localises to the nucleus. Its function is as follows. Putative transcriptional activator that binds specifically to the DNA sequence 5'-[AG]CCGAC-3'. The protein is Putative dehydration-responsive element-binding protein 2H (DREB2H) of Arabidopsis thaliana (Mouse-ear cress).